The following is a 75-amino-acid chain: Acyl carrier protein (75 aa).

Residues Met-1 to Glu-75 form the Carrier domain. Residue Ser-35 is modified to O-(pantetheine 4'-phosphoryl)serine.

This sequence belongs to the acyl carrier protein (ACP) family. 4'-phosphopantetheine is transferred from CoA to a specific serine of apo-ACP by AcpS. This modification is essential for activity because fatty acids are bound in thioester linkage to the sulfhydryl of the prosthetic group.

The protein resides in the cytoplasm. The protein operates within lipid metabolism; fatty acid biosynthesis. Functionally, carrier of the growing fatty acid chain in fatty acid biosynthesis. This chain is Acyl carrier protein, found in Thermoanaerobacter pseudethanolicus (strain ATCC 33223 / 39E) (Clostridium thermohydrosulfuricum).